A 619-amino-acid chain; its full sequence is DNA mismatch repair protein MutL (619 aa).

The segment at 339–400 (AEKDDPPAPR…GGASWPHAQP (62 aa)) is disordered.

This sequence belongs to the DNA mismatch repair MutL/HexB family.

Functionally, this protein is involved in the repair of mismatches in DNA. It is required for dam-dependent methyl-directed DNA mismatch repair. May act as a 'molecular matchmaker', a protein that promotes the formation of a stable complex between two or more DNA-binding proteins in an ATP-dependent manner without itself being part of a final effector complex. The sequence is that of DNA mismatch repair protein MutL from Klebsiella pneumoniae subsp. pneumoniae (strain ATCC 700721 / MGH 78578).